Here is a 1391-residue protein sequence, read N- to C-terminus: MNLLNLFNPLQTAGMEEEFDAIKIGIASPETIRSWSYGEVKKPETINYRTFKPERDGLFCAKIFGPVKDYECLCGKYKRLKFKGVTCEKCGVEVTLSKVRRERMGHIELAAPVAHIWFLKSLPSRLGMVLNMTLRDIERVLYFEAFVVTDPGMTPLQRRQLLTEDDYYNKLDEYGDDFDAKMGAEGIRELLRTLDVAGEIEILRQELESTGSDTKIKKIAKRLKVLEAFHRSGMKLEWMIMDVLPVLPPDLRPLVPLDGGRFATSDLNDLYRRVINRNNRLKRLLELHAPDIIVRNEKRMLQEAVDSLLDNGRRGKAMTGANKRPLKSLADMIKGKGGRFRQNLLGKRVDYSGRSVITVGPYLRLHQCGLPKKMALELFKPFIFHKLEKQGLASTVKAAKKLVEQEVPEVWDILEEVIREHPIMLNRAPTLHRLGIQAFEPILIEGKAIQLHPLVCAAFNADFDGDQMAVHVPLSLEAQMEARTLMLASNNVLSPANGEPIIVPSQDIVLGLYYMTRDRINAKGEGSLFADVKEVHRAYHTKQVELGTKITVRLREWVKNEAGEFEPVVNRYETTVGRALLSEILPKGLPFEYVNKALKKKEISKLINASFRLCGLRDTVIFADHLMYTGFGFAAKGGISIAVDDMEIPKEKAALLAEANAEVKEIEDQYRQGLVTNGERYNKVVDIWGRAGDKIAKAMMDNLSKQKVIDRDGNEVDQESFNSIYMMADSGARGSAAQIKQLSGMRGLMAKPDGSIIETPITSNFREGLTVLQYFIATHGARKGLADTALKTANSGYLTRRLVDVTQDLVVVEDDCGTSDGFVMKAVVQGGDVIEALRDRILGRVTASDVVDPSSGETLVEAGTLLTEKLVDMIDQSGVDEVKVRTPITCKTRHGLCAHCYGRDLARGKLVNAGEAVGVIAAQSIGEPGTQLTMRTFHIGGAASRAAAASQVEAKSNGTARFSSQMRYVANNKGELVVIGRSCEVVIHDDIGRERERHKVPYGAILLVQDGMAIKAGQTLATWDPHTRPMITEHAGMVKFENMEEGVTVAKQTDDVTGLSALVVIDGKRRSSSASKLLRPTVKLLDENGVEICIPGTSTPVSMAFPVGAVITVREGQEIGKGDVLARIPQASSKTRDITGGLPRVAELFEARVPKDAGMLAEITGTVSFGKETKGKQRLIITDVDGVAYETLISKEKQILVHDGQVVNRGETIVDGAVDPHDILRLQGIEALARYIVQEVQEVYRLQGVKISDKHIEVIIRQMLRRVNIADAGETGFITGEQVERGDMMAANEKALEEGKEPARYENILLGITKASLSTDSFISAASFQETTRVLTEAAIMGKQDELRGLKENVIVGRLIPAGTGLTYHRSRHQQWQGVEQETAETQVTDE.

Positions 72, 74, 87, and 90 each coordinate Zn(2+). Residues Asp-462, Asp-464, and Asp-466 each coordinate Mg(2+). Zn(2+)-binding residues include Cys-816, Cys-890, Cys-897, and Cys-900.

It belongs to the RNA polymerase beta' chain family. The RNAP catalytic core consists of 2 alpha, 1 beta, 1 beta' and 1 omega subunit. When a sigma factor is associated with the core the holoenzyme is formed, which can initiate transcription. Mg(2+) is required as a cofactor. The cofactor is Zn(2+).

It catalyses the reaction RNA(n) + a ribonucleoside 5'-triphosphate = RNA(n+1) + diphosphate. In terms of biological role, DNA-dependent RNA polymerase catalyzes the transcription of DNA into RNA using the four ribonucleoside triphosphates as substrates. In Neisseria gonorrhoeae (strain NCCP11945), this protein is DNA-directed RNA polymerase subunit beta'.